Reading from the N-terminus, the 101-residue chain is Protein Tat (101 aa).

Positions 1–24 (MEPIDPNLEPWNHPGSQPKTACNN) are interaction with human CREBBP. Residues 1-48 (MEPIDPNLEPWNHPGSQPKTACNNCYCKQCCYHCQLCFTKKGLGISYG) form a transactivation region. Positions 22, 25, and 27 each coordinate Zn(2+). The segment at 22–37 (CNNCYCKQCCYHCQLC) is cysteine-rich. Lysine 28 is subject to N6-acetyllysine; by host PCAF. The Zn(2+) site is built by cysteine 30, histidine 33, cysteine 34, and cysteine 37. A core region spans residues 38 to 48 (FTKKGLGISYG). The tract at residues 48-101 (GRRKRKQRRRTSESSQNHQDPVPKQPLSQPGGIETGQKKSKKEVESQTTSDQFA) is disordered. The Nuclear localization signal, RNA-binding (TAR), and protein transduction signature appears at 49–57 (RRKRKQRRR). The interval 49–86 (RRKRKQRRRTSESSQNHQDPVPKQPLSQPGGIETGQKK) is interaction with the host capping enzyme RNGTT. Residue lysine 51 is modified to N6-acetyllysine; by host EP300 and GCN5L2. Arginine 52 bears the Asymmetric dimethylarginine; by host PRMT6 mark. A Glycyl lysine isopeptide (Lys-Gly) (interchain with G-Cter in ubiquitin) cross-link involves residue lysine 71.

The protein belongs to the lentiviruses Tat family. Interacts with host CCNT1. Associates with the P-TEFb complex composed at least of Tat, P-TEFb (CDK9 and CCNT1), TAR RNA, RNA Pol II. Recruits the HATs CREBBP, TAF1/TFIID, EP300, PCAF and GCN5L2. Interacts with host KAT5/Tip60; this interaction targets the latter to degradation. Interacts with the host deacetylase SIRT1. Interacts with host capping enzyme RNGTT; this interaction stimulates RNGTT. Binds to host KDR, and to the host integrins ITGAV/ITGB3 and ITGA5/ITGB1. Interacts with host KPNB1/importin beta-1 without previous binding to KPNA1/importin alpha-1. Interacts with EIF2AK2. Interacts with host nucleosome assembly protein NAP1L1; this interaction may be required for the transport of Tat within the nucleus, since the two proteins interact at the nuclear rim. Interacts with host C1QBP/SF2P32; this interaction involves lysine-acetylated Tat. Interacts with the host chemokine receptors CCR2, CCR3 and CXCR4. Interacts with host DPP4/CD26; this interaction may trigger an anti-proliferative effect. Interacts with host LDLR. Interacts with the host extracellular matrix metalloproteinase MMP1. Interacts with host PRMT6; this interaction mediates Tat's methylation. Interacts with, and is ubiquitinated by MDM2/Hdm2. Interacts with host PSMC3 and HTATIP2. Interacts with STAB1; this interaction may overcome SATB1-mediated repression of IL2 and IL2RA (interleukin) in T cells by binding to the same domain than HDAC1. Interacts (when acetylated) with human CDK13, thereby increasing HIV-1 mRNA splicing and promoting the production of the doubly spliced HIV-1 protein Nef. Interacts with host TBP; this interaction modulates the activity of transcriptional pre-initiation complex. Interacts with host RELA. Post-translationally, asymmetrical arginine methylation by host PRMT6 seems to diminish the transactivation capacity of Tat and affects the interaction with host CCNT1. In terms of processing, polyubiquitination by host MDM2 does not target Tat to degradation, but activates its transactivation function and fosters interaction with CCNT1 and TAR RNA. Phosphorylated by EIF2AK2 on serine and threonine residues adjacent to the basic region important for TAR RNA binding and function. Phosphorylation of Tat by EIF2AK2 is dependent on the prior activation of EIF2AK2 by dsRNA.

It localises to the host nucleus. It is found in the host nucleolus. The protein localises to the host cytoplasm. Its subcellular location is the secreted. Its function is as follows. Transcriptional activator that increases RNA Pol II processivity, thereby increasing the level of full-length viral transcripts. Recognizes a hairpin structure at the 5'-LTR of the nascent viral mRNAs referred to as the transactivation responsive RNA element (TAR) and recruits the cyclin T1-CDK9 complex (P-TEFb complex) that will in turn hyperphosphorylate the RNA polymerase II to allow efficient elongation. The CDK9 component of P-TEFb and other Tat-activated kinases hyperphosphorylate the C-terminus of RNA Pol II that becomes stabilized and much more processive. Other factors such as HTATSF1/Tat-SF1, SUPT5H/SPT5, and HTATIP2 are also important for Tat's function. Besides its effect on RNA Pol II processivity, Tat induces chromatin remodeling of proviral genes by recruiting the histone acetyltransferases (HATs) CREBBP, EP300 and PCAF to the chromatin. This also contributes to the increase in proviral transcription rate, especially when the provirus integrates in transcriptionally silent region of the host genome. To ensure maximal activation of the LTR, Tat mediates nuclear translocation of NF-kappa-B by interacting with host RELA. Through its interaction with host TBP, Tat may also modulate transcription initiation. Tat can reactivate a latently infected cell by penetrating in it and transactivating its LTR promoter. In the cytoplasm, Tat is thought to act as a translational activator of HIV-1 mRNAs. Functionally, extracellular circulating Tat can be endocytosed by surrounding uninfected cells via the binding to several surface receptors such as CD26, CXCR4, heparan sulfate proteoglycans (HSPG) or LDLR. Neurons are rarely infected, but they internalize Tat via their LDLR. Through its interaction with nuclear HATs, Tat is potentially able to control the acetylation-dependent cellular gene expression. Modulates the expression of many cellular genes involved in cell survival, proliferation or in coding for cytokines or cytokine receptors. Tat plays a role in T-cell and neurons apoptosis. Tat induced neurotoxicity and apoptosis probably contribute to neuroAIDS. Circulating Tat also acts as a chemokine-like and/or growth factor-like molecule that binds to specific receptors on the surface of the cells, affecting many cellular pathways. In the vascular system, Tat binds to ITGAV/ITGB3 and ITGA5/ITGB1 integrins dimers at the surface of endothelial cells and competes with bFGF for heparin-binding sites, leading to an excess of soluble bFGF. The polypeptide is Protein Tat (Pan troglodytes (Chimpanzee)).